A 245-amino-acid chain; its full sequence is Thiopurine S-methyltransferase (245 aa).

29–40 (WQEKWVSRRIGF) provides a ligand contact to S-adenosyl-L-methionine. A substrate-binding site is contributed by phenylalanine 40. At lysine 58 the chain carries N6-acetyllysine. 3 residues coordinate S-adenosyl-L-methionine: leucine 69, glutamate 90, and arginine 152.

This sequence belongs to the class I-like SAM-binding methyltransferase superfamily. TPMT family. As to quaternary structure, monomer.

Its subcellular location is the cytoplasm. It carries out the reaction S-adenosyl-L-methionine + a thiopurine = S-adenosyl-L-homocysteine + a thiopurine S-methylether.. The protein is Thiopurine S-methyltransferase (TPMT) of Canis lupus familiaris (Dog).